The chain runs to 443 residues: Probable protein S-acyltransferase 7 (443 aa).

The next 2 helical transmembrane spans lie at 44–64 (SLALTICLIAVPVTIFCIFVA) and 76–96 (GVSIVAVAVVFTIYDLILLLL). Residues 149-199 (KYCDTCMLYRPPRCSHCSICNNCVERFDHHCPWVGQCIGMRNYRFFFMFVF) form the DHHC domain. The S-palmitoyl cysteine intermediate role is filled by Cys179. 2 consecutive transmembrane segments (helical) span residues 193–213 (FFFMFVFSTTLLCIYVFAFCW) and 237–257 (SIVLIIYTFISMWFVGGLTVF). Residues Ser327 and Ser377 each carry the phosphoserine modification. The span at 382–392 (ATVDEQSDRPS) shows a compositional bias: basic and acidic residues. The tract at residues 382–443 (ATVDEQSDRP…SGLVTENRPT (62 aa)) is disordered. A Phosphoserine modification is found at Ser406.

It belongs to the DHHC palmitoyltransferase family.

It localises to the cell membrane. It carries out the reaction L-cysteinyl-[protein] + hexadecanoyl-CoA = S-hexadecanoyl-L-cysteinyl-[protein] + CoA. Its function is as follows. Palmitoyl acyltransferase. This chain is Probable protein S-acyltransferase 7 (PAT07), found in Arabidopsis thaliana (Mouse-ear cress).